The primary structure comprises 184 residues: ATP synthase subunit b, chloroplastic (184 aa).

Residues 27-49 form a helical membrane-spanning segment; it reads LATNPINLSVVFGVLIFFGKGVL.

The protein belongs to the ATPase B chain family. As to quaternary structure, F-type ATPases have 2 components, F(1) - the catalytic core - and F(0) - the membrane proton channel. F(1) has five subunits: alpha(3), beta(3), gamma(1), delta(1), epsilon(1). F(0) has four main subunits: a(1), b(1), b'(1) and c(10-14). The alpha and beta chains form an alternating ring which encloses part of the gamma chain. F(1) is attached to F(0) by a central stalk formed by the gamma and epsilon chains, while a peripheral stalk is formed by the delta, b and b' chains.

Its subcellular location is the plastid. The protein resides in the chloroplast thylakoid membrane. Its function is as follows. F(1)F(0) ATP synthase produces ATP from ADP in the presence of a proton or sodium gradient. F-type ATPases consist of two structural domains, F(1) containing the extramembraneous catalytic core and F(0) containing the membrane proton channel, linked together by a central stalk and a peripheral stalk. During catalysis, ATP synthesis in the catalytic domain of F(1) is coupled via a rotary mechanism of the central stalk subunits to proton translocation. Functionally, component of the F(0) channel, it forms part of the peripheral stalk, linking F(1) to F(0). The sequence is that of ATP synthase subunit b, chloroplastic from Arabidopsis thaliana (Mouse-ear cress).